The following is a 327-amino-acid chain: Zinc transport protein ZntB (327 aa).

At 1-273 the chain is on the cytoplasmic side; the sequence is MEAIKGSEVN…ARRTYTMSLM (273 aa). A helical membrane pass occupies residues 274 to 294; that stretch reads AMVFLPSTFLTGLFGVNLGGI. Over 295–300 the chain is Periplasmic; it reads PGGAWH. Residues 301–321 traverse the membrane as a helical segment; it reads FGFSMFCILLVVLIGGVTLWL. The Cytoplasmic portion of the chain corresponds to 322–327; that stretch reads HRSKWL.

The protein belongs to the CorA metal ion transporter (MIT) (TC 1.A.35) family.

Its subcellular location is the cell inner membrane. It catalyses the reaction Zn(2+)(out) + H(+)(out) = Zn(2+)(in) + H(+)(in). Zinc transporter. Acts as a Zn(2+):proton symporter, which likely mediates zinc ion uptake. This Citrobacter koseri (strain ATCC BAA-895 / CDC 4225-83 / SGSC4696) protein is Zinc transport protein ZntB.